Here is a 179-residue protein sequence, read N- to C-terminus: Insulin-like growth factor 2 (179 aa).

An N-terminal signal peptide occupies residues 1–24; it reads MGITAGKSMLALLAFLAFASCCYA. Positions 25-52 are b; that stretch reads AYRPSETLCGGELVDTLQFVCGDRGFYF. Intrachain disulfides connect Cys-33–Cys-71, Cys-45–Cys-84, and Cys-70–Cys-75. The c stretch occupies residues 53-64; the sequence is SRPSSRINRRSR. Residues 65–85 are a; sequence GIVEECCFRSCDLALLETYCA. Residues 86 to 91 form a d region; the sequence is APAKSE. The propeptide at 92–179 is e peptide; the sequence is RDVSASTTVL…GGASSEASSD (88 aa). Residue Thr-106 is glycosylated (O-linked (GalNAc...) threonine). Ser-154 carries O-linked (GalNAc...) serine glycosylation. Residues 160 to 179 form a disordered region; sequence ALPTQDPATHGGASSEASSD. Thr-163 carries O-linked (GalNAc...) threonine glycosylation.

It belongs to the insulin family. In terms of assembly, interacts with MYORG; this interaction is required for IGF2 secretion. Interacts with integrins ITGAV:ITGB3 and ITGA6:ITGB4; integrin-binding is required for IGF2 signaling. Interacts with IGFBP2. Post-translationally, proteolytically processed by PCSK4, proIGF2 is cleaved at Arg-128 and Arg-92 to generate big-IGF2 and mature IGF2.

It localises to the secreted. In terms of biological role, the insulin-like growth factors possess growth-promoting activity. Major fetal growth hormone in mammals. Plays a key role in regulating fetoplacental development. IGF2 is influenced by placental lactogen. Also involved in tissue differentiation. In adults, involved in glucose metabolism in adipose tissue, skeletal muscle and liver. Acts as a ligand for integrin which is required for IGF2 signaling. Positively regulates myogenic transcription factor MYOD1 function by facilitating the recruitment of transcriptional coactivators, thereby controlling muscle terminal differentiation. Inhibits myoblast differentiation and modulates metabolism via increasing the mitochondrial respiration rate. Functionally, preptin undergoes glucose-mediated co-secretion with insulin, and acts as a physiological amplifier of glucose-mediated insulin secretion. Exhibits osteogenic properties by increasing osteoblast mitogenic activity through phosphoactivation of MAPK1 and MAPK3. The chain is Insulin-like growth factor 2 from Ovis aries (Sheep).